Here is a 169-residue protein sequence, read N- to C-terminus: MNHIALFEPRIHFNTGNIARTCAATNTVLHLIEPFGFEISDKHLKRAGLDYWDKVNIVYHKNLQDFMNSIADGGQLYLVSKFAEHVYSDVDYSDDKKDHYFLFGREDTGLPEEFMHEHRDECIRIPMNDEHVRSLNLSNCACMIVYEALKQQEFRGLELVHTYEKDKLK.

S-adenosyl-L-methionine contacts are provided by Val79, Gly104, Ile125, and Ser134.

This sequence belongs to the class IV-like SAM-binding methyltransferase superfamily. RNA methyltransferase TrmH family. TrmL subfamily.

The protein localises to the cytoplasm. The enzyme catalyses cytidine(34) in tRNA + S-adenosyl-L-methionine = 2'-O-methylcytidine(34) in tRNA + S-adenosyl-L-homocysteine + H(+). It catalyses the reaction 5-carboxymethylaminomethyluridine(34) in tRNA(Leu) + S-adenosyl-L-methionine = 5-carboxymethylaminomethyl-2'-O-methyluridine(34) in tRNA(Leu) + S-adenosyl-L-homocysteine + H(+). Functionally, could methylate the ribose at the nucleotide 34 wobble position in tRNA. The protein is Putative tRNA (cytidine(34)-2'-O)-methyltransferase of Lactococcus lactis subsp. cremoris (strain MG1363).